The following is a 368-amino-acid chain: 4-hydroxy-3-methylbut-2-en-1-yl diphosphate synthase (flavodoxin) (368 aa).

The [4Fe-4S] cluster site is built by C271, C274, C306, and E313.

Belongs to the IspG family. [4Fe-4S] cluster serves as cofactor.

The enzyme catalyses (2E)-4-hydroxy-3-methylbut-2-enyl diphosphate + oxidized [flavodoxin] + H2O + 2 H(+) = 2-C-methyl-D-erythritol 2,4-cyclic diphosphate + reduced [flavodoxin]. The protein operates within isoprenoid biosynthesis; isopentenyl diphosphate biosynthesis via DXP pathway; isopentenyl diphosphate from 1-deoxy-D-xylulose 5-phosphate: step 5/6. Functionally, converts 2C-methyl-D-erythritol 2,4-cyclodiphosphate (ME-2,4cPP) into 1-hydroxy-2-methyl-2-(E)-butenyl 4-diphosphate. In Haemophilus influenzae (strain PittGG), this protein is 4-hydroxy-3-methylbut-2-en-1-yl diphosphate synthase (flavodoxin).